Consider the following 551-residue polypeptide: Palmdelphin (551 aa).

M1 is modified (N-acetylmethionine). A coiled-coil region spans residues 12–106 (QAITDKRKIQ…LQISTKEEAI (95 aa)). K125 participates in a covalent cross-link: Glycyl lysine isopeptide (Lys-Gly) (interchain with G-Cter in SUMO2). A Phosphoserine modification is found at S135. K179 is covalently cross-linked (Glycyl lysine isopeptide (Lys-Gly) (interchain with G-Cter in SUMO1); alternate). K179 participates in a covalent cross-link: Glycyl lysine isopeptide (Lys-Gly) (interchain with G-Cter in SUMO2); alternate. A compositionally biased stretch (basic and acidic residues) spans 248-259 (ERNSKSPTEYHE). The interval 248–280 (ERNSKSPTEYHEPVYANPFYRPTTPQRETVTPG) is disordered. Residues 270–280 (TTPQRETVTPG) are compositionally biased toward polar residues. T271 is modified (phosphothreonine). Phosphoserine is present on residues S321, S370, S384, and S385. 2 disordered regions span residues 342 to 392 (TPQK…QEDE) and 449 to 535 (DEEE…EDPS). A compositionally biased stretch (basic and acidic residues) spans 484–495 (KRSEASPHENTN). Residues S498, S515, and S520 each carry the phosphoserine modification.

Belongs to the paralemmin family. In terms of assembly, interacts with GLUL. Post-translationally, phosphorylated. As to expression, ubiquitous. Most abundant in cardiac and skeletal muscle.

The protein localises to the cytoplasm. The protein resides in the cell projection. It is found in the dendrite. It localises to the dendritic spine. The protein is Palmdelphin (PALMD) of Homo sapiens (Human).